Reading from the N-terminus, the 291-residue chain is Acetyl-coenzyme A carboxylase carboxyl transferase subunit beta (291 aa).

The interval 1–23 is disordered; sequence MSWLSKLMPSGIRTDNTPSKKRS. In terms of domain architecture, CoA carboxyltransferase N-terminal spans 28-291; that stretch reads LWEKCSNCGS…LGRQPAPEVA (264 aa). Positions 32, 35, 51, and 54 each coordinate Zn(2+). The segment at 32-54 adopts a C4-type zinc-finger fold; the sequence is CSNCGSALYRPELEENLEVCPKC.

Belongs to the AccD/PCCB family. As to quaternary structure, acetyl-CoA carboxylase is a heterohexamer composed of biotin carboxyl carrier protein (AccB), biotin carboxylase (AccC) and two subunits each of ACCase subunit alpha (AccA) and ACCase subunit beta (AccD). Zn(2+) serves as cofactor.

The protein localises to the cytoplasm. The catalysed reaction is N(6)-carboxybiotinyl-L-lysyl-[protein] + acetyl-CoA = N(6)-biotinyl-L-lysyl-[protein] + malonyl-CoA. Its pathway is lipid metabolism; malonyl-CoA biosynthesis; malonyl-CoA from acetyl-CoA: step 1/1. Its function is as follows. Component of the acetyl coenzyme A carboxylase (ACC) complex. Biotin carboxylase (BC) catalyzes the carboxylation of biotin on its carrier protein (BCCP) and then the CO(2) group is transferred by the transcarboxylase to acetyl-CoA to form malonyl-CoA. The sequence is that of Acetyl-coenzyme A carboxylase carboxyl transferase subunit beta from Stenotrophomonas maltophilia (strain K279a).